The sequence spans 336 residues: Fructose-1,6-bisphosphatase class 1 (336 aa).

The Mg(2+) site is built by Glu92, Asp115, Leu117, and Asp118. Residues 118–121, Asn211, Tyr244, 262–264, and Lys274 contribute to the substrate site; these read DGSS and YLY. Glu280 contacts Mg(2+).

The protein belongs to the FBPase class 1 family. In terms of assembly, homotetramer. Mg(2+) serves as cofactor.

It localises to the cytoplasm. The catalysed reaction is beta-D-fructose 1,6-bisphosphate + H2O = beta-D-fructose 6-phosphate + phosphate. The protein operates within carbohydrate biosynthesis; gluconeogenesis. The polypeptide is Fructose-1,6-bisphosphatase class 1 (Vibrio atlanticus (strain LGP32) (Vibrio splendidus (strain Mel32))).